A 115-amino-acid chain; its full sequence is Macrophage migration inhibitory factor homolog (115 aa).

Residue proline 2 is the Proton acceptor; via imino nitrogen of the active site. Residues lysine 33 and isoleucine 65 each contribute to the substrate site.

Belongs to the MIF family.

It localises to the secreted. It carries out the reaction L-dopachrome = 5,6-dihydroxyindole-2-carboxylate. The enzyme catalyses 3-phenylpyruvate = enol-phenylpyruvate. In terms of biological role, tautomerization of the methyl ester of L-dopachrome. Inhibits migration of human peripheral blood mononuclear cells. This is Macrophage migration inhibitory factor homolog from Brugia malayi (Filarial nematode worm).